A 152-amino-acid polypeptide reads, in one-letter code: Transcriptional regulator MraZ (152 aa).

SpoVT-AbrB domains follow at residues 5–52 (ASAV…PLNQ) and 81–124 (ATEC…SESE).

The protein belongs to the MraZ family. As to quaternary structure, forms oligomers.

Its subcellular location is the cytoplasm. It localises to the nucleoid. The chain is Transcriptional regulator MraZ from Histophilus somni (strain 129Pt) (Haemophilus somnus).